The chain runs to 502 residues: Lysine--tRNA ligase (502 aa).

Residues E413 and E420 each coordinate Mg(2+).

It belongs to the class-II aminoacyl-tRNA synthetase family. In terms of assembly, homodimer. Mg(2+) is required as a cofactor.

It localises to the cytoplasm. The catalysed reaction is tRNA(Lys) + L-lysine + ATP = L-lysyl-tRNA(Lys) + AMP + diphosphate. The sequence is that of Lysine--tRNA ligase from Haemophilus influenzae (strain 86-028NP).